Consider the following 144-residue polypeptide: Maximins 10/H15 (144 aa).

An N-terminal signal peptide occupies residues 1 to 18 (MNFKYIVAVSFLIASAYA). Positions 19-43 (RSVQNDEQSLSQRDVLEEESLREIR) are excised as a propeptide. A Serine amide modification is found at Ser70. A propeptide spanning residues 74–123 (TAEDHEVMKRLEAVMRDLDSLDYPEEATERETRGFNQEEIANLFTKKEKR) is cleaved from the precursor. Leucine amide is present on Leu143.

Belongs to the bombinin family. Expressed by the skin glands.

The protein resides in the secreted. Functionally, maximin-10 shows antimicrobial activity against bacteria and against the fungus C.albicans. It has little hemolytic activity. Maximin-H15 shows antimicrobial activity against bacteria and against the fungus C.albicans. Shows strong hemolytic activity. The protein is Maximins 10/H15 of Bombina maxima (Giant fire-bellied toad).